Consider the following 251-residue polypeptide: Protein FAM216A (251 aa).

Residues 1 to 41 are disordered; sequence MPSRWPGVAGPPALARTEGGEGSAGHSYPQNSKGTGEQHKA.

The protein belongs to the FAM216 family.

The chain is Protein FAM216A (Fam216a) from Mus musculus (Mouse).